The following is a 334-amino-acid chain: Anthranilate phosphoribosyltransferase (334 aa).

5-phospho-alpha-D-ribose 1-diphosphate-binding positions include Gly81, 84–85, Thr89, 91–94, 109–117, and Ala121; these read GD, NIST, and KHGSRSVSS. Anthranilate is bound at residue Gly81. Ser93 is a binding site for Mg(2+). Residue Arg167 participates in anthranilate binding. The Mg(2+) site is built by Asp225 and Glu226.

This sequence belongs to the anthranilate phosphoribosyltransferase family. In terms of assembly, homodimer. Requires Mg(2+) as cofactor.

The enzyme catalyses N-(5-phospho-beta-D-ribosyl)anthranilate + diphosphate = 5-phospho-alpha-D-ribose 1-diphosphate + anthranilate. Its pathway is amino-acid biosynthesis; L-tryptophan biosynthesis; L-tryptophan from chorismate: step 2/5. Catalyzes the transfer of the phosphoribosyl group of 5-phosphorylribose-1-pyrophosphate (PRPP) to anthranilate to yield N-(5'-phosphoribosyl)-anthranilate (PRA). This chain is Anthranilate phosphoribosyltransferase, found in Actinobacillus pleuropneumoniae serotype 7 (strain AP76).